The primary structure comprises 372 residues: MEAKEKQHLLDARPAIRSYTGSLWQEGAGWIPLPRPGLDLQAIELAAQSNHHCHAQKGPDSHCDPKKGKAQRQLYVASAICLLFMIGEVVGGYLAHSLAVMTDAAHLLTDFASMLISLFSLWMSSRPATKTMNFGWQRAEILGALVSVLSIWVVTGVLVYLAVERLISGDYEIDGGTMLITSGCAVAVNIIMGLTLHQSGHGHSHGTTNQQEENPSVRAAFIHVIGDFMQSMGVLVAAYILYFKPEYKYVDPICTFVFSILVLGTTLTILRDVILVLMEGTPKGVDFTAVRDLLLSVEGVEALHSLHIWALTVAQPVLSVHIAIAQNTDAQAVLKTASSRLQGKFHFHTVTIQIEDYSEDMKDCQACQGPSD.

Residues 1–140 (MEAKEKQHLL…TMNFGWQRAE (140 aa)) lie on the Cytoplasmic side of the membrane. Positions 51–54 (HHCH) match the Mitochondrial localization signal motif. Residues Cys53, His106, and Asp110 each coordinate Zn(2+). Residues 141-161 (ILGALVSVLSIWVVTGVLVYL) form a helical membrane-spanning segment. Residues 162–175 (AVERLISGDYEIDG) are Lumenal-facing. Residues 176 to 196 (GTMLITSGCAVAVNIIMGLTL) form a helical membrane-spanning segment. At 197-220 (HQSGHGHSHGTTNQQEENPSVRAA) the chain is on the cytoplasmic side. Residues 221-241 (FIHVIGDFMQSMGVLVAAYIL) traverse the membrane as a helical segment. Positions 223 and 227 each coordinate Zn(2+). At 242–249 (YFKPEYKY) the chain is on the lumenal side. A helical transmembrane segment spans residues 250–270 (VDPICTFVFSILVLGTTLTIL). The Cytoplasmic portion of the chain corresponds to 271 to 304 (RDVILVLMEGTPKGVDFTAVRDLLLSVEGVEALH). Positions 294–295 (LL) match the Lysosomal targeting motif motif. A Phosphoserine modification is found at Ser296. Zn(2+) is bound by residues His304, His321, and Glu355. A helical transmembrane segment spans residues 305-325 (SLHIWALTVAQPVLSVHIAIA). Topologically, residues 326–372 (QNTDAQAVLKTASSRLQGKFHFHTVTIQIEDYSEDMKDCQACQGPSD) are lumenal.

The protein belongs to the cation diffusion facilitator (CDF) transporter (TC 2.A.4) family. SLC30A subfamily. In terms of assembly, homodimer. Interacts (via lysosomal targeting motif) with AP3D1; in AP-3-mediated transport to lysosomes. Interacts with TMEM163. In terms of processing, phosphorylated at Ser-296. Phosphorylation at Ser-296 prevents localization to lysosomes. Dephosphorylation of Ser-296 which triggers localization to lysosomes, accumulation of zinc into lysosomes and lysosomal-mediated cell death is induced by TNF-alpha.

It is found in the cytoplasmic vesicle. It localises to the secretory vesicle membrane. The protein localises to the zymogen granule membrane. Its subcellular location is the endosome membrane. The protein resides in the lysosome membrane. It is found in the mitochondrion inner membrane. It localises to the cell membrane. It catalyses the reaction Zn(2+)(in) + 2 H(+)(out) = Zn(2+)(out) + 2 H(+)(in). Functionally, electroneutral proton-coupled antiporter concentrating zinc ions into a variety of intracellular organelles including endosomes, zymogen granules and mitochondria. Thereby, plays a crucial role in cellular zinc homeostasis to confer upon cells protection against its potential cytotoxicity. Regulates the zinc concentration of milk, through the transport of zinc ions into secretory vesicles of mammary cells. By concentrating zinc ions into lysosomes participates to lysosomal-mediated cell death during early mammary gland involution. In terms of biological role, electroneutral proton-coupled antiporter mediating the efflux of zinc ions through the plasma membrane. This Homo sapiens (Human) protein is Proton-coupled zinc antiporter SLC30A2.